We begin with the raw amino-acid sequence, 442 residues long: D-serine dehydratase (442 aa).

At Lys-118 the chain carries N6-(pyridoxal phosphate)lysine.

The protein belongs to the serine/threonine dehydratase family. DsdA subfamily. Monomer. Pyridoxal 5'-phosphate serves as cofactor.

The catalysed reaction is D-serine = pyruvate + NH4(+). The protein is D-serine dehydratase of Shigella flexneri serotype 5b (strain 8401).